The chain runs to 485 residues: Homospermidine synthase (485 aa).

Belongs to the saccharopine dehydrogenase family. The cofactor is NAD(+).

It carries out the reaction 2 putrescine = sym-homospermidine + NH4(+). It catalyses the reaction putrescine + spermidine = sym-homospermidine + propane-1,3-diamine. In terms of biological role, involved in the NAD(+)-dependent synthesis of the polyamine homospermidine from putrescine. This Mesorhizobium japonicum (strain LMG 29417 / CECT 9101 / MAFF 303099) (Mesorhizobium loti (strain MAFF 303099)) protein is Homospermidine synthase (hss).